A 155-amino-acid chain; its full sequence is Small ribosomal subunit protein uS7 (155 aa).

This sequence belongs to the universal ribosomal protein uS7 family. In terms of assembly, part of the 30S ribosomal subunit. Contacts proteins S9 and S11.

One of the primary rRNA binding proteins, it binds directly to 16S rRNA where it nucleates assembly of the head domain of the 30S subunit. Is located at the subunit interface close to the decoding center, probably blocks exit of the E-site tRNA. This is Small ribosomal subunit protein uS7 from Xanthomonas axonopodis pv. citri (strain 306).